Reading from the N-terminus, the 191-residue chain is Repressor Rok (191 aa).

Positions 2-43 (FNEREALRLRLEQLNEAEVKVIREYQIERDKIYAKLRELDRN) form a coiled coil. A compositionally biased stretch (low complexity) spans 75-96 (SYQPQSQQQSVQPQLQSISSLP). Residues 75–116 (SYQPQSQQQSVQPQLQSISSLPAGIPDGTTRRRRGTARPGSK) form a disordered region. Positions 95 to 191 (LPAGIPDGTT…EIESAESANE (97 aa)) are DNA-binding.

The protein resides in the cytoplasm. It localises to the nucleoid. Its function is as follows. Repressor of comK, the master regulator of competence development. Overexpression seems to be lethal. Represses at least 20 genes that specify membrane-localized and secreted proteins, including some that encode products with antibiotic activity. Binds to many AT-rich sites in the chromosome, many of which are known or thought to derive from horizontal gene transfer; helps keep mobile element ICEBs1 quiescent in the genome. Binds to its own promoter and is thus probably autoregulatory. In Bacillus subtilis (strain 168), this protein is Repressor Rok.